The chain runs to 152 residues: Transcriptional regulator MraZ (152 aa).

SpoVT-AbrB domains are found at residues 5-52 and 81-124; these read ATLV…PLPE and ASEC…DETT.

It belongs to the MraZ family. As to quaternary structure, forms oligomers.

The protein resides in the cytoplasm. It is found in the nucleoid. Its function is as follows. Negatively regulates its own expression and that of the subsequent genes in the proximal part of the division and cell wall (dcw) gene cluster. Acts by binding directly to DNA. May also regulate the expression of genes outside the dcw cluster. This is Transcriptional regulator MraZ from Escherichia coli O45:K1 (strain S88 / ExPEC).